A 59-amino-acid polypeptide reads, in one-letter code: Large ribosomal subunit protein uL30 (59 aa).

Belongs to the universal ribosomal protein uL30 family. As to quaternary structure, part of the 50S ribosomal subunit.

The sequence is that of Large ribosomal subunit protein uL30 from Aeromonas hydrophila subsp. hydrophila (strain ATCC 7966 / DSM 30187 / BCRC 13018 / CCUG 14551 / JCM 1027 / KCTC 2358 / NCIMB 9240 / NCTC 8049).